Here is a 403-residue protein sequence, read N- to C-terminus: Ribosomal RNA large subunit methyltransferase I (403 aa).

The PUA domain maps to 9 to 88 (YPRLILSKGR…ESIDIAFFTR (80 aa)).

Belongs to the methyltransferase superfamily. RlmI family.

It is found in the cytoplasm. It catalyses the reaction cytidine(1962) in 23S rRNA + S-adenosyl-L-methionine = 5-methylcytidine(1962) in 23S rRNA + S-adenosyl-L-homocysteine + H(+). Specifically methylates the cytosine at position 1962 (m5C1962) of 23S rRNA. This chain is Ribosomal RNA large subunit methyltransferase I, found in Salmonella paratyphi C (strain RKS4594).